The sequence spans 313 residues: 3-O-acetylpapaveroxine carboxylesterase CXE2 (313 aa).

Positions 72-74 (HGG) match the Involved in the stabilization of the negatively charged intermediate by the formation of the oxyanion hole motif. Active-site residues include Ser-158, Asp-262, and His-292.

It belongs to the 'GDXG' lipolytic enzyme family.

The catalysed reaction is 3-O-acetylpapaveroxine + H2O = narcotine hemiacetal + acetate + H(+). It functions in the pathway alkaloid biosynthesis. In terms of biological role, carboxylesterase involved in the biosynthesis of the benzylisoquinoline alkaloid noscapine. Converts 3-O-acetylpapaveroxine to narcotine hemiacetal. The protein is 3-O-acetylpapaveroxine carboxylesterase CXE2 of Papaver somniferum (Opium poppy).